The primary structure comprises 230 residues: Large ribosomal subunit protein bL25 (230 aa).

Belongs to the bacterial ribosomal protein bL25 family. CTC subfamily. In terms of assembly, part of the 50S ribosomal subunit; part of the 5S rRNA/L5/L18/L25 subcomplex. Contacts the 5S rRNA. Binds to the 5S rRNA independently of L5 and L18.

Its function is as follows. This is one of the proteins that binds to the 5S RNA in the ribosome where it forms part of the central protuberance. In Rhodopseudomonas palustris (strain ATCC BAA-98 / CGA009), this protein is Large ribosomal subunit protein bL25 (rplY).